Here is a 144-residue protein sequence, read N- to C-terminus: MLQPKKTKFRRQQKGRMKGFAQRGNQLSFGSFGIKSLQSKWITGRQIEAARIAVTRYMQRQGQVWVRIFPDKPITKKGEGVRMGKGKGAPEGFVAPITPGRIIFEVEGVPYEIAKEALRLAAQKLPVTTKFVVRHDYDIQNQNA.

It belongs to the universal ribosomal protein uL16 family. As to quaternary structure, part of the 50S ribosomal subunit.

Binds 23S rRNA and is also seen to make contacts with the A and possibly P site tRNAs. The polypeptide is Large ribosomal subunit protein uL16 (Porphyromonas gingivalis (strain ATCC 33277 / DSM 20709 / CIP 103683 / JCM 12257 / NCTC 11834 / 2561)).